The chain runs to 246 residues: Proteasome subunit alpha (246 aa).

The protein belongs to the peptidase T1A family. As to quaternary structure, the 20S proteasome core is composed of 14 alpha and 14 beta subunits that assemble into four stacked heptameric rings, resulting in a barrel-shaped structure. The two inner rings, each composed of seven catalytic beta subunits, are sandwiched by two outer rings, each composed of seven alpha subunits. The catalytic chamber with the active sites is on the inside of the barrel. Has probably a gated structure, the ends of the cylinder being occluded by the N-termini of the alpha-subunits. Is likely capped at one or both ends by the proteasome regulatory ATPase, PAN.

The protein localises to the cytoplasm. With respect to regulation, the formation of the proteasomal ATPase PAN-20S proteasome complex, via the docking of the C-termini of PAN into the intersubunit pockets in the alpha-rings, triggers opening of the gate for substrate entry. Interconversion between the open-gate and close-gate conformations leads to a dynamic regulation of the 20S proteasome proteolysis activity. In terms of biological role, component of the proteasome core, a large protease complex with broad specificity involved in protein degradation. The sequence is that of Proteasome subunit alpha from Archaeoglobus fulgidus (strain ATCC 49558 / DSM 4304 / JCM 9628 / NBRC 100126 / VC-16).